Consider the following 231-residue polypeptide: Orotidine 5'-phosphate decarboxylase (231 aa).

Substrate contacts are provided by residues D9, K34, D62–V71, T117, R179, Q188, G208, and R209. The active-site Proton donor is K64.

This sequence belongs to the OMP decarboxylase family. Type 1 subfamily. Homodimer.

It carries out the reaction orotidine 5'-phosphate + H(+) = UMP + CO2. It participates in pyrimidine metabolism; UMP biosynthesis via de novo pathway; UMP from orotate: step 2/2. Functionally, catalyzes the decarboxylation of orotidine 5'-monophosphate (OMP) to uridine 5'-monophosphate (UMP). The protein is Orotidine 5'-phosphate decarboxylase of Aquifex aeolicus (strain VF5).